A 377-amino-acid chain; its full sequence is UPF0754 membrane protein LMHCC_0318 (377 aa).

Transmembrane regions (helical) follow at residues 1-21 and 357-377; these read MSVL…GAMT and YLGG…AMWI.

The protein belongs to the UPF0754 family.

Its subcellular location is the cell membrane. In Listeria monocytogenes serotype 4a (strain HCC23), this protein is UPF0754 membrane protein LMHCC_0318.